Here is a 202-residue protein sequence, read N- to C-terminus: uncharacterized protein (202 aa).

This is an uncharacterized protein from Methanocaldococcus jannaschii (strain ATCC 43067 / DSM 2661 / JAL-1 / JCM 10045 / NBRC 100440) (Methanococcus jannaschii).